A 493-amino-acid polypeptide reads, in one-letter code: MPERRTVALVTLGCARNEVDSEELAGRLAADGWDLVEDASDADVAVVNTCGFVEAAKKDSVDALLEANDLKDHGRTQAVVAVGCMAERYGKDLAEALPEADGVLGFDDYADISDRLQTILNGGIHASHTPRDRRKLLPISPAERQDTAVALPGHAQEAPAPAPEDLPEGVAPVSGPRAPLRRRLGTSPVASVKLASGCDRRCSFCAIPSFRGSFISRRPSDVLQETRWLAEQGVKEVMLVSENNTSYGKDLGDIRLLETLLPELADVDGIERIRVSYLQPAEMRPGLIDVLTSTPKVAPYFDLSFQHSAPGVLRAMRRFGDTDRFLELLDTIRSKAPQAGARSNFIVGFPGETEADLAELERFLTGARLDAIGVFGYSDEEGTEAVGYENKLDADTIAERLAHISQLAEELTSQRAEERVGETLQVLVESVESEEDGEVAIGRAAHQAPETDGQVVFTTREGLVPGLMVEAKAVGTEGVDLVAEHHELAEVAR.

The MTTase N-terminal domain maps to 5-121 (RTVALVTLGC…ISDRLQTILN (117 aa)). [4Fe-4S] cluster-binding residues include cysteine 14, cysteine 50, cysteine 84, cysteine 198, cysteine 202, and cysteine 205. Residues 184–415 (LGTSPVASVK…QLAEELTSQR (232 aa)) enclose the Radical SAM core domain. The 71-residue stretch at 417-487 (EERVGETLQV…GVDLVAEHHE (71 aa)) folds into the TRAM domain.

Belongs to the methylthiotransferase family. RimO subfamily. The cofactor is [4Fe-4S] cluster.

It is found in the cytoplasm. It catalyses the reaction L-aspartate(89)-[ribosomal protein uS12]-hydrogen + (sulfur carrier)-SH + AH2 + 2 S-adenosyl-L-methionine = 3-methylsulfanyl-L-aspartate(89)-[ribosomal protein uS12]-hydrogen + (sulfur carrier)-H + 5'-deoxyadenosine + L-methionine + A + S-adenosyl-L-homocysteine + 2 H(+). Catalyzes the methylthiolation of an aspartic acid residue of ribosomal protein uS12. This Streptomyces griseus subsp. griseus (strain JCM 4626 / CBS 651.72 / NBRC 13350 / KCC S-0626 / ISP 5235) protein is Ribosomal protein uS12 methylthiotransferase RimO.